We begin with the raw amino-acid sequence, 272 residues long: Glutamate racemase (272 aa).

Substrate contacts are provided by residues Asp-9 to Ser-10 and Tyr-41 to Gly-42. The Proton donor/acceptor role is filled by Cys-73. Asn-74–Thr-75 contributes to the substrate binding site. Cys-183 functions as the Proton donor/acceptor in the catalytic mechanism. Residue Thr-184–His-185 coordinates substrate.

The protein belongs to the aspartate/glutamate racemases family.

The enzyme catalyses L-glutamate = D-glutamate. It functions in the pathway cell wall biogenesis; peptidoglycan biosynthesis. In terms of biological role, provides the (R)-glutamate required for cell wall biosynthesis. This is Glutamate racemase from Shewanella sp. (strain MR-7).